The chain runs to 3003 residues: MAX gene-associated protein (3003 aa).

Glycyl lysine isopeptide (Lys-Gly) (interchain with G-Cter in SUMO2) cross-links involve residues K4 and K178. The T-box DNA-binding region spans 84 to 260 (MWNEFHNRST…YNPFAKGFRD (177 aa)). Residues 259 to 277 (RDDGLSSKPQREGKQRNSS) are compositionally biased toward basic and acidic residues. The disordered stretch occupies residues 259–290 (RDDGLSSKPQREGKQRNSSDQEGNSVSSSPAH). A compositionally biased stretch (polar residues) spans 278 to 288 (DQEGNSVSSSP). Residues K323, K329, K348, K431, K458, K463, and K480 each participate in a glycyl lysine isopeptide (Lys-Gly) (interchain with G-Cter in SUMO2) cross-link. Position 531 is a phosphoserine (S531). The interval 553 to 647 (ILDNSSTERI…NIPVGPGSTF (95 aa)) is disordered. Residue K567 forms a Glycyl lysine isopeptide (Lys-Gly) (interchain with G-Cter in SUMO2) linkage. The span at 595 to 607 (KTVTASHSASPNT) shows a compositional bias: polar residues. S604 carries the phosphoserine modification. Residues K610, K651, K782, K788, K814, and K823 each participate in a glycyl lysine isopeptide (Lys-Gly) (interchain with G-Cter in SUMO2) cross-link. A compositionally biased stretch (basic residues) spans 610-621 (KRGRPRKLRLSK). S848 bears the Phosphoserine mark. Residues 871 to 913 (KQSTISPSTSHSVKPQSVTTASRKTKAQNKQTTLSGRTKSSYK) are compositionally biased toward polar residues. Disordered regions lie at residues 871 to 946 (KQST…TSDN) and 967 to 987 (LRQA…GLSK). The residue at position 921 (S921) is a Phosphoserine. A Glycyl lysine isopeptide (Lys-Gly) (interchain with G-Cter in SUMO2) cross-link involves residue K925. Positions 937-946 (KNSLSSTSDN) are enriched in polar residues. Low complexity predominate over residues 969–978 (QAQQQHLQQQ). Glycyl lysine isopeptide (Lys-Gly) (interchain with G-Cter in SUMO2) cross-links involve residues K987 and K1088. Positions 1111–1130 (LGEEGREGGGVREDEEQLKE) are disordered. The segment covering 1113–1122 (EEGREGGGVR) has biased composition (basic and acidic residues). Residues K1136, K1158, K1194, and K1202 each participate in a glycyl lysine isopeptide (Lys-Gly) (interchain with G-Cter in SUMO2) cross-link. Disordered stretches follow at residues 1186-1215 (QPDL…NPVI), 1246-1277 (QRQL…TKEL), 1297-1323 (SQEK…RSPG), and 1376-1424 (RGEK…DISP). Composition is skewed to low complexity over residues 1248-1269 (QLSP…YSSP) and 1303-1315 (KSSC…SSTS). A phosphoserine mark is found at S1423 and S1450. Residues K1454 and K1495 each participate in a glycyl lysine isopeptide (Lys-Gly) (interchain with G-Cter in SUMO2) cross-link. Disordered stretches follow at residues 1476–1508 (AKVA…RSGK), 1722–1746 (PPVS…SNNV), 1856–1885 (ISPP…PVGT), 1920–1954 (IKKE…KALD), 1964–1983 (SGII…GGDL), and 1988–2038 (TLRE…AGSK). Polar residues-rich tracts occupy residues 1488–1507 (LPST…NRSG), 1735–1746 (PVTTPQISSNNV), and 1859–1880 (PETQ…STGG). Glycyl lysine isopeptide (Lys-Gly) (interchain with G-Cter in SUMO2) cross-links involve residues K1937 and K1944. A compositionally biased stretch (polar residues) spans 1964-1976 (SGIIASENTSNNS). Glycyl lysine isopeptide (Lys-Gly) (interchain with G-Cter in SUMO2) cross-links involve residues K2060 and K2084. Residues 2087 to 2110 (LSGNQVKEQQSNSQAEAKKDCEDS) form a disordered region. The span at 2088-2101 (SGNQVKEQQSNSQA) shows a compositional bias: polar residues. Glycyl lysine isopeptide (Lys-Gly) (interchain with G-Cter in SUMO2) cross-links involve residues K2104, K2152, and K2179. Residue R2206 is modified to Omega-N-methylarginine. The segment at 2207 to 2255 (GSRHFQGHLLLPREQMKPKQQTKDGRSSAADFTVLDLEDEDEEDEKTDD) is disordered. Residues 2220–2232 (EQMKPKQQTKDGR) show a composition bias toward basic and acidic residues. K2225 participates in a covalent cross-link: Glycyl lysine isopeptide (Lys-Gly) (interchain with G-Cter in SUMO2). Acidic residues predominate over residues 2242 to 2255 (DLEDEDEEDEKTDD). Glycyl lysine isopeptide (Lys-Gly) (interchain with G-Cter in SUMO2) cross-links involve residues K2317, K2352, K2396, and K2471. Residues 2362-2413 (YYRRTHTANERRRRGEMRDLFEKLKITLGLLHSSKVSKSLILNRAFSEIQGL) form the bHLH domain. S2480 is subject to Phosphoserine. Residues 2515–2534 (KRDQATENASPSDTPHSSAN) form a disordered region. The span at 2520 to 2534 (TENASPSDTPHSSAN) shows a compositional bias: polar residues. Residues K2568 and K2618 each participate in a glycyl lysine isopeptide (Lys-Gly) (interchain with G-Cter in SUMO2) cross-link. The segment covering 2629-2651 (SEASSLKDTERISSRGNHRDSRK) has biased composition (basic and acidic residues). A disordered region spans residues 2629–2654 (SEASSLKDTERISSRGNHRDSRKALG). Residue K2724 forms a Glycyl lysine isopeptide (Lys-Gly) (interchain with G-Cter in SUMO2) linkage. 2 positions are modified to phosphoserine: S2849 and S2860. The disordered stretch occupies residues 2877-2917 (LVSHRKSSDGGQSTSGLPAEPESVSSPPILHMKTGPENSNT). K2979 is covalently cross-linked (Glycyl lysine isopeptide (Lys-Gly) (interchain with G-Cter in SUMO2)).

Component of some MLL1/MLL complex, at least composed of the core components KMT2A/MLL1, ASH2L, HCFC1/HCF1, WDR5 and RBBP5, as well as the facultative components BACC1, CHD8, E2F6, HSP70, INO80C, KANSL1, LAS1L, MAX, MCRS1, MGA, MYST1/MOF, PELP1, PHF20, PRP31, RING2, RUVB1/TIP49A, RUVB2/TIP49B, SENP3, TAF1, TAF4, TAF6, TAF7, TAF9 and TEX10. Interacts with ZMYND11. Interacts with MAX. Requires heterodimerization with MAX for E-box binding. Highly expressed in germ cells and granulosa cells.

It is found in the nucleus. Functionally, functions as a dual-specificity transcription factor, regulating the expression of both MAX-network and T-box family target genes. Functions as a repressor or an activator. Binds to 5'-AATTTCACACCTAGGTGTGAAATT-3' core sequence and seems to regulate MYC-MAX target genes. Suppresses transcriptional activation by MYC and inhibits MYC-dependent cell transformation. Function activated by heterodimerization with MAX. This heterodimerization serves the dual function of both generating an E-box-binding heterodimer and simultaneously blocking interaction of a corepressor. This chain is MAX gene-associated protein, found in Mus musculus (Mouse).